A 346-amino-acid chain; its full sequence is Holliday junction branch migration complex subunit RuvB (346 aa).

The segment at 1 to 181 (MSDRNPLIDA…FGIPTRLNFY (181 aa)) is large ATPase domain (RuvB-L). ATP-binding positions include Leu-20, Arg-21, Gly-62, Lys-65, Thr-66, Thr-67, 128-130 (EDF), Arg-171, Tyr-181, and Arg-218. Thr-66 is a Mg(2+) binding site. A small ATPAse domain (RuvB-S) region spans residues 182-252 (TVEELEYIVR…IADEALSRLE (71 aa)). Residues 255–346 (NRGLDQLDRR…SQYGLFMEDE (92 aa)) form a head domain (RuvB-H) region. DNA is bound by residues Arg-291, Arg-310, and Arg-315.

Belongs to the RuvB family. In terms of assembly, homohexamer. Forms an RuvA(8)-RuvB(12)-Holliday junction (HJ) complex. HJ DNA is sandwiched between 2 RuvA tetramers; dsDNA enters through RuvA and exits via RuvB. An RuvB hexamer assembles on each DNA strand where it exits the tetramer. Each RuvB hexamer is contacted by two RuvA subunits (via domain III) on 2 adjacent RuvB subunits; this complex drives branch migration. In the full resolvosome a probable DNA-RuvA(4)-RuvB(12)-RuvC(2) complex forms which resolves the HJ.

It is found in the cytoplasm. The enzyme catalyses ATP + H2O = ADP + phosphate + H(+). The RuvA-RuvB-RuvC complex processes Holliday junction (HJ) DNA during genetic recombination and DNA repair, while the RuvA-RuvB complex plays an important role in the rescue of blocked DNA replication forks via replication fork reversal (RFR). RuvA specifically binds to HJ cruciform DNA, conferring on it an open structure. The RuvB hexamer acts as an ATP-dependent pump, pulling dsDNA into and through the RuvAB complex. RuvB forms 2 homohexamers on either side of HJ DNA bound by 1 or 2 RuvA tetramers; 4 subunits per hexamer contact DNA at a time. Coordinated motions by a converter formed by DNA-disengaged RuvB subunits stimulates ATP hydrolysis and nucleotide exchange. Immobilization of the converter enables RuvB to convert the ATP-contained energy into a lever motion, pulling 2 nucleotides of DNA out of the RuvA tetramer per ATP hydrolyzed, thus driving DNA branch migration. The RuvB motors rotate together with the DNA substrate, which together with the progressing nucleotide cycle form the mechanistic basis for DNA recombination by continuous HJ branch migration. Branch migration allows RuvC to scan DNA until it finds its consensus sequence, where it cleaves and resolves cruciform DNA. This chain is Holliday junction branch migration complex subunit RuvB, found in Brucella anthropi (strain ATCC 49188 / DSM 6882 / CCUG 24695 / JCM 21032 / LMG 3331 / NBRC 15819 / NCTC 12168 / Alc 37) (Ochrobactrum anthropi).